Reading from the N-terminus, the 436-residue chain is Peptidase B (436 aa).

2 residues coordinate Mn(2+): Lys201 and Asp206. Residue Lys213 is part of the active site. Asp224, Asp283, and Glu285 together coordinate Mn(2+). Arg287 is an active-site residue.

This sequence belongs to the peptidase M17 family. Homohexamer. Mn(2+) serves as cofactor.

It localises to the cytoplasm. The enzyme catalyses Release of an N-terminal amino acid, Xaa, from a peptide or arylamide. Xaa is preferably Glu or Asp but may be other amino acids, including Leu, Met, His, Cys and Gln.. Probably plays an important role in intracellular peptide degradation. This Pectobacterium atrosepticum (strain SCRI 1043 / ATCC BAA-672) (Erwinia carotovora subsp. atroseptica) protein is Peptidase B.